We begin with the raw amino-acid sequence, 274 residues long: Large ribosomal subunit protein uL2cz/uL2cy (274 aa).

Disordered stretches follow at residues 1–26 (MAIH…KSNP) and 223–274 (MNPV…RRSK).

This sequence belongs to the universal ribosomal protein uL2 family. Part of the 50S ribosomal subunit.

Its subcellular location is the plastid. The protein resides in the chloroplast. The protein is Large ribosomal subunit protein uL2cz/uL2cy (rpl2-A) of Daucus carota (Wild carrot).